The following is a 320-amino-acid chain: UDP-N-acetylenolpyruvoylglucosamine reductase (320 aa).

The region spanning 34-200 is the FAD-binding PCMH-type domain; sequence RAGGLAEVFF…TSAVFEGFAE (167 aa). Arg180 is an active-site residue. Ser229 (proton donor) is an active-site residue. Glu299 is an active-site residue.

Belongs to the MurB family. Requires FAD as cofactor.

The protein resides in the cytoplasm. The enzyme catalyses UDP-N-acetyl-alpha-D-muramate + NADP(+) = UDP-N-acetyl-3-O-(1-carboxyvinyl)-alpha-D-glucosamine + NADPH + H(+). It functions in the pathway cell wall biogenesis; peptidoglycan biosynthesis. Cell wall formation. This Mesorhizobium japonicum (strain LMG 29417 / CECT 9101 / MAFF 303099) (Mesorhizobium loti (strain MAFF 303099)) protein is UDP-N-acetylenolpyruvoylglucosamine reductase.